A 428-amino-acid chain; its full sequence is Sulfite exporter TauE/SafE family protein 6 (428 aa).

The next 11 membrane-spanning stretches (helical) occupy residues 1 to 21 (MKTL…NANQ), 61 to 81 (ALVV…ASGI), 82 to 102 (GDGF…LKAA), 105 to 125 (FSAF…HFGC), 128 to 148 (LIDY…VSVG), 149 to 169 (VICN…VFLM), 245 to 265 (YWIL…LALS), 294 to 314 (VMSF…GMII), 332 to 352 (TSFM…LLGM), 356 to 376 (EAAY…LVFA), and 388 to 408 (IIVF…ASFG).

This sequence belongs to the 4-toluene sulfonate uptake permease (TSUP) (TC 2.A.102) family.

It localises to the membrane. In Arabidopsis thaliana (Mouse-ear cress), this protein is Sulfite exporter TauE/SafE family protein 6.